The following is a 479-amino-acid chain: Dihydrolipoyl dehydrogenase, mitochondrial (479 aa).

The N-terminal 19 residues, 1-19, are a transit peptide targeting the mitochondrion; the sequence is FNRXSPGLQGVSSVPLRTY. At K50 the chain carries N6-acetyllysine; alternate. N6-succinyllysine; alternate is present on K50. FAD contacts are provided by residues 55 to 64 and K73; that span reads EKNETLGGTC. A disulfide bridge connects residues C64 and C69. K88, K106, K116, and K127 each carry N6-acetyllysine; alternate. N6-succinyllysine; alternate occurs at positions 88, 106, 116, and 127. G138 contacts FAD. 2 positions are modified to N6-succinyllysine: K143 and K150. 167-169 is an FAD binding site; the sequence is TGS. NAD(+) is bound by residues 204–211 and E227; that span reads GAGVIGVE. An N6-succinyllysine mark is found at K257 and K261. Residue V262 coordinates NAD(+). S269 is modified (phosphoserine). G298 provides a ligand contact to NAD(+). K330 bears the N6-acetyllysine mark. Residues D339 and 345–348 each bind FAD; that span reads MLAH. K394 carries the post-translational modification N6-acetyllysine; alternate. The residue at position 394 (K394) is an N6-succinyllysine; alternate. K401 and K404 each carry N6-acetyllysine. Residue K414 is modified to N6-succinyllysine. H471 (proton acceptor) is an active-site residue.

Belongs to the class-I pyridine nucleotide-disulfide oxidoreductase family. Homodimer. Part of the multimeric pyruvate dehydrogenase complex that contains multiple copies of pyruvate dehydrogenase (subunits PDHA (PDHA1 or PDHA2) and PDHB, E1), dihydrolipoamide acetyltransferase (DLAT, E2) and lipoamide dehydrogenase (DLD, E3). These subunits are bound to an inner core composed of about 48 DLAT and 12 PDHX molecules (by non covalent bonds). The 2-oxoglutarate dehydrogenase complex is composed of OGDH (2-oxoglutarate dehydrogenase; E1), DLST (dihydrolipoamide succinyltransferase; E2) and DLD (dihydrolipoamide dehydrogenase; E3). It contains multiple copies of the three enzymatic components (E1, E2 and E3). In the nucleus, the 2-oxoglutarate dehydrogenase complex associates with KAT2A. Interacts with PDHX. The cofactor is FAD. In terms of processing, tyrosine phosphorylated. As to expression, expressed in testis (at protein level).

It is found in the mitochondrion matrix. Its subcellular location is the nucleus. It localises to the cell projection. The protein resides in the cilium. The protein localises to the flagellum. It is found in the cytoplasmic vesicle. Its subcellular location is the secretory vesicle. It localises to the acrosome. The catalysed reaction is N(6)-[(R)-dihydrolipoyl]-L-lysyl-[protein] + NAD(+) = N(6)-[(R)-lipoyl]-L-lysyl-[protein] + NADH + H(+). In terms of biological role, lipoamide dehydrogenase is a component of the glycine cleavage system as well as an E3 component of three alpha-ketoacid dehydrogenase complexes (pyruvate-, alpha-ketoglutarate-, and branched-chain amino acid-dehydrogenase complex). The 2-oxoglutarate dehydrogenase complex is mainly active in the mitochondrion. A fraction of the 2-oxoglutarate dehydrogenase complex also localizes in the nucleus and is required for lysine succinylation of histones: associates with KAT2A on chromatin and provides succinyl-CoA to histone succinyltransferase KAT2A. In monomeric form may have additional moonlighting function as serine protease. Involved in the hyperactivation of spermatazoa during capacitation and in the spermatazoal acrosome reaction. The chain is Dihydrolipoyl dehydrogenase, mitochondrial (DLD) from Mesocricetus auratus (Golden hamster).